We begin with the raw amino-acid sequence, 77 residues long: Large ribosomal subunit protein eL20 (77 aa).

This sequence belongs to the eukaryotic ribosomal protein eL20 family. In terms of assembly, part of the 50S ribosomal subunit. Binds 23S rRNA.

The protein is Large ribosomal subunit protein eL20 of Pyrococcus furiosus (strain ATCC 43587 / DSM 3638 / JCM 8422 / Vc1).